The chain runs to 284 residues: Transcription factor lir-3 (284 aa).

A compositionally biased stretch (basic and acidic residues) spans 50–60; it reads EPRISRDELRE. The interval 50–71 is disordered; it reads EPRISRDELRETASSPVTFETR. The segment at 224–247 adopts a C2H2-type zinc-finger fold; that stretch reads YKCKQCDYLDYRKSTMRKHTVSQH.

Expressed in FLP neurons.

It localises to the nucleus. Positively regulates the RNA polymerase III-associated transcription of small non-coding RNAs. This is Transcription factor lir-3 from Caenorhabditis elegans.